The primary structure comprises 393 residues: NAD(P)H-quinone oxidoreductase subunit H, chloroplastic (393 aa).

Belongs to the complex I 49 kDa subunit family. In terms of assembly, NDH is composed of at least 16 different subunits, 5 of which are encoded in the nucleus.

The protein resides in the plastid. The protein localises to the chloroplast thylakoid membrane. The catalysed reaction is a plastoquinone + NADH + (n+1) H(+)(in) = a plastoquinol + NAD(+) + n H(+)(out). The enzyme catalyses a plastoquinone + NADPH + (n+1) H(+)(in) = a plastoquinol + NADP(+) + n H(+)(out). Its function is as follows. NDH shuttles electrons from NAD(P)H:plastoquinone, via FMN and iron-sulfur (Fe-S) centers, to quinones in the photosynthetic chain and possibly in a chloroplast respiratory chain. The immediate electron acceptor for the enzyme in this species is believed to be plastoquinone. Couples the redox reaction to proton translocation, and thus conserves the redox energy in a proton gradient. This Anthoceros angustus (Hornwort) protein is NAD(P)H-quinone oxidoreductase subunit H, chloroplastic.